The sequence spans 79 residues: Sec-independent protein translocase protein TatA (79 aa).

The chain crosses the membrane as a helical span at residues 1–21; the sequence is MGGWSSPSHWLIILLIVVLLF. The segment covering 49-61 has biased composition (basic and acidic residues); that stretch reads EVAKNTQKIEENK. The interval 49 to 79 is disordered; it reads EVAKNTQKIEENKNTTNNTNADASIDETKKA.

Belongs to the TatA/E family. The Tat system comprises two distinct complexes: a TatABC complex, containing multiple copies of TatA, TatB and TatC subunits, and a separate TatA complex, containing only TatA subunits. Substrates initially bind to the TatABC complex, which probably triggers association of the separate TatA complex to form the active translocon.

It is found in the cell inner membrane. Part of the twin-arginine translocation (Tat) system that transports large folded proteins containing a characteristic twin-arginine motif in their signal peptide across membranes. TatA could form the protein-conducting channel of the Tat system. In Campylobacter jejuni subsp. doylei (strain ATCC BAA-1458 / RM4099 / 269.97), this protein is Sec-independent protein translocase protein TatA.